A 498-amino-acid polypeptide reads, in one-letter code: DEAD-box ATP-dependent RNA helicase 12 (498 aa).

The tract at residues 1-114 (MNTNRGRYPP…RLPPPDTRYQ (114 aa)) is disordered. The segment covering 27 to 65 (SYRQQQPPQDQQYVQRGYSQNPQQMQLQQQHQQQQQQQQ) has biased composition (low complexity). Residues 74–96 (GNASNANEVVQQTTQPEASSDAN) show a composition bias toward polar residues. Positions 124-152 (NEFEDYFLKRDLLKGIYEKGFEKPSPIQE) match the Q motif motif. The Helicase ATP-binding domain maps to 155–325 (IPIALTGSDI…DRHLRKPYVI (171 aa)). Position 168–175 (168–175 (AKNGTGKT)) interacts with ATP. Threonine 230 is modified (phosphothreonine). The DEAD box signature appears at 273–276 (DEAD). Residues 335–495 (GVTQYYAFVE…PIPSNIDQAI (161 aa)) form the Helicase C-terminal domain.

It belongs to the DEAD box helicase family. DDX6/DHH1 subfamily.

The protein resides in the cytoplasm. The protein localises to the P-body. It carries out the reaction ATP + H2O = ADP + phosphate + H(+). In terms of biological role, ATP-dependent RNA helicase involved in mRNA turnover, and more specifically in mRNA decapping. In Arabidopsis thaliana (Mouse-ear cress), this protein is DEAD-box ATP-dependent RNA helicase 12 (RH12).